Reading from the N-terminus, the 139-residue chain is Large ribosomal subunit protein uL16 (139 aa).

It belongs to the universal ribosomal protein uL16 family. In terms of assembly, part of the 50S ribosomal subunit.

Functionally, binds 23S rRNA and is also seen to make contacts with the A and possibly P site tRNAs. The sequence is that of Large ribosomal subunit protein uL16 from Treponema denticola (strain ATCC 35405 / DSM 14222 / CIP 103919 / JCM 8153 / KCTC 15104).